A 255-amino-acid chain; its full sequence is 5'-nucleotidase SurE (255 aa).

Residues Asp-8, Asp-9, Ser-39, and Asn-91 each coordinate a divalent metal cation.

The protein belongs to the SurE nucleotidase family. It depends on a divalent metal cation as a cofactor.

Its subcellular location is the cytoplasm. The catalysed reaction is a ribonucleoside 5'-phosphate + H2O = a ribonucleoside + phosphate. Its function is as follows. Nucleotidase that shows phosphatase activity on nucleoside 5'-monophosphates. The polypeptide is 5'-nucleotidase SurE (Nitrosospira multiformis (strain ATCC 25196 / NCIMB 11849 / C 71)).